Here is a 427-residue protein sequence, read N- to C-terminus: 3-phosphoshikimate 1-carboxyvinyltransferase (427 aa).

3-phosphoshikimate contacts are provided by K22, S23, and R27. K22 contacts phosphoenolpyruvate. The phosphoenolpyruvate site is built by G97 and R125. S171, S172, Q173, S199, D315, N338, and K342 together coordinate 3-phosphoshikimate. Q173 is a binding site for phosphoenolpyruvate. Catalysis depends on D315, which acts as the Proton acceptor. Phosphoenolpyruvate is bound by residues R346, R388, and K413.

Belongs to the EPSP synthase family. Monomer.

The protein localises to the cytoplasm. It carries out the reaction 3-phosphoshikimate + phosphoenolpyruvate = 5-O-(1-carboxyvinyl)-3-phosphoshikimate + phosphate. It functions in the pathway metabolic intermediate biosynthesis; chorismate biosynthesis; chorismate from D-erythrose 4-phosphate and phosphoenolpyruvate: step 6/7. Functionally, catalyzes the transfer of the enolpyruvyl moiety of phosphoenolpyruvate (PEP) to the 5-hydroxyl of shikimate-3-phosphate (S3P) to produce enolpyruvyl shikimate-3-phosphate and inorganic phosphate. This is 3-phosphoshikimate 1-carboxyvinyltransferase from Aliivibrio salmonicida (strain LFI1238) (Vibrio salmonicida (strain LFI1238)).